Consider the following 154-residue polypeptide: D-aminoacyl-tRNA deacylase (154 aa).

The short motif at 138 to 139 (GP) is the Gly-cisPro motif, important for rejection of L-amino acids element.

The protein belongs to the DTD family. Homodimer.

Its subcellular location is the cytoplasm. It catalyses the reaction glycyl-tRNA(Ala) + H2O = tRNA(Ala) + glycine + H(+). The enzyme catalyses a D-aminoacyl-tRNA + H2O = a tRNA + a D-alpha-amino acid + H(+). An aminoacyl-tRNA editing enzyme that deacylates mischarged D-aminoacyl-tRNAs. Also deacylates mischarged glycyl-tRNA(Ala), protecting cells against glycine mischarging by AlaRS. Acts via tRNA-based rather than protein-based catalysis; rejects L-amino acids rather than detecting D-amino acids in the active site. By recycling D-aminoacyl-tRNA to D-amino acids and free tRNA molecules, this enzyme counteracts the toxicity associated with the formation of D-aminoacyl-tRNA entities in vivo and helps enforce protein L-homochirality. In Halorhodospira halophila (strain DSM 244 / SL1) (Ectothiorhodospira halophila (strain DSM 244 / SL1)), this protein is D-aminoacyl-tRNA deacylase.